A 366-amino-acid chain; its full sequence is Histidinol-phosphate aminotransferase 2 (366 aa).

The interval 1-21 (MQVKDQLSLLQPYKPGKSPEQ) is disordered. N6-(pyridoxal phosphate)lysine is present on Lys222.

The protein belongs to the class-II pyridoxal-phosphate-dependent aminotransferase family. Histidinol-phosphate aminotransferase subfamily. As to quaternary structure, homodimer. Pyridoxal 5'-phosphate serves as cofactor.

The catalysed reaction is L-histidinol phosphate + 2-oxoglutarate = 3-(imidazol-4-yl)-2-oxopropyl phosphate + L-glutamate. The protein operates within amino-acid biosynthesis; L-histidine biosynthesis; L-histidine from 5-phospho-alpha-D-ribose 1-diphosphate: step 7/9. The sequence is that of Histidinol-phosphate aminotransferase 2 from Bacillus cereus (strain ZK / E33L).